A 405-amino-acid polypeptide reads, in one-letter code: LENGLARTPPMGWLAWERFRCNVNCREDPRQCISEMLFMEMADRIAEDGWRELGYKYINIDDCWAAKQRDAEGRLVPDPERFPRGIKALADYVHARGLKLDIYGDLGRLTCGGYPGTTLDRVEQDAQTFAEWGVDMLKLDGCYSSGKEQAQGYPQMARALNSTGRPIVYSCSWPAYQGGLPPKVNYTLLGEICNLWRNYDDIQDSWDSVLSIVDWFFTNQDVLQPFAGPGHWNDPDMLIIGNFGLSYEQSRSQMALWTIMAAPLLMSTDLRTISPSAKKILQNRLMIQINQDPLGIQGRRIIKEGSHIEVFLRPLSQAASALVFFSRRTDMPFRYTTSLAKLGFPMGAAYEVQDVYSGKIISGLKTGDNFTVIINPSGVVMWYLCPKALLIQQQAPGGPSRLPLL.

3 disulfide bridges follow: Cys-21-Cys-63, Cys-25-Cys-32, and Cys-111-Cys-142. Residues 61-62 and Lys-138 each bind substrate; that span reads DD. Catalysis depends on Asp-140, which acts as the Nucleophile. N-linked (GlcNAc...) asparagine glycosylation is present at Asn-161. Cys-171 and Cys-193 are disulfide-bonded. Position 172 (Ser-172) interacts with substrate. A glycan (N-linked (GlcNAc...) asparagine) is linked at Asn-185. 2 residues coordinate substrate: Arg-197 and Asp-201. The active-site Proton donor is Asp-201. N-linked (GlcNAc...) asparagine glycosylation is present at Asn-369.

This sequence belongs to the glycosyl hydrolase 27 family. As to quaternary structure, homodimer.

It localises to the lysosome. It carries out the reaction Cleavage of non-reducing alpha-(1-&gt;3)-N-acetylgalactosamine residues from human blood group A and AB mucin glycoproteins, Forssman hapten and blood group A lacto series glycolipids.. The catalysed reaction is a neolactoside IV(3)-alpha-GalNAc,IV(2)-alpha-Fuc-nLc4Cer(d18:1(4E)) + H2O = a neolactoside IV(2)-alpha-Fuc-nLc4Cer(d18:1(4E)) + N-acetyl-alpha-D-galactosamine. It catalyses the reaction a neolactoside IV(3)-alpha-GalNAc,IV(2)-alpha-Fuc-nLc4Cer(d18:0) + H2O = a neolactoside IV(2)-alpha-Fuc-nLc4Cer(d18:0) + N-acetyl-alpha-D-galactosamine. The enzyme catalyses a globoside IV3GalNAc-Gb4Cer + H2O = N-acetyl-alpha-D-galactosamine + a globoside Gb4Cer. Functionally, removes terminal alpha-N-acetylgalactosamine residues from glycolipids and glycopeptides. Required for the breakdown of glycolipids. This Gallus gallus (Chicken) protein is Alpha-N-acetylgalactosaminidase (NAGA).